Reading from the N-terminus, the 251-residue chain is Pyruvate formate-lyase-activating enzyme (251 aa).

A Radical SAM core domain is found at 15–244 (VDGPGLRYIL…KEAYRYVNFN (230 aa)). The [4Fe-4S] cluster site is built by Cys-29, Cys-33, and Cys-36. S-adenosyl-L-methionine is bound by residues 35–37 (YCH), Gly-79, 134–136 (DIK), and His-207.

This sequence belongs to the organic radical-activating enzymes family. It depends on [4Fe-4S] cluster as a cofactor.

It localises to the cytoplasm. It catalyses the reaction glycyl-[formate C-acetyltransferase] + reduced [flavodoxin] + S-adenosyl-L-methionine = glycin-2-yl radical-[formate C-acetyltransferase] + semiquinone [flavodoxin] + 5'-deoxyadenosine + L-methionine + H(+). Its function is as follows. Activation of pyruvate formate-lyase under anaerobic conditions by generation of an organic free radical, using S-adenosylmethionine and reduced flavodoxin as cosubstrates to produce 5'-deoxy-adenosine. This Staphylococcus epidermidis (strain ATCC 12228 / FDA PCI 1200) protein is Pyruvate formate-lyase-activating enzyme (pflA).